The sequence spans 422 residues: Elongation factor 1-alpha (422 aa).

The tr-type G domain occupies 5–221 (KPHMNLAVIG…NSLKEPEKPS (217 aa)). Positions 14-21 (GHIDHGKS) are G1. 14–21 (GHIDHGKS) contacts GTP. Ser-21 is a binding site for Mg(2+). Residues 70–74 (GITID) form a G2 region. The tract at residues 91 to 94 (DCPG) is G3. GTP contacts are provided by residues 91–95 (DCPGH) and 146–149 (NKMD). The interval 146–149 (NKMD) is G4. The segment at 185-187 (SAF) is G5.

It belongs to the TRAFAC class translation factor GTPase superfamily. Classic translation factor GTPase family. EF-Tu/EF-1A subfamily.

It localises to the cytoplasm. The catalysed reaction is GTP + H2O = GDP + phosphate + H(+). In terms of biological role, GTP hydrolase that promotes the GTP-dependent binding of aminoacyl-tRNA to the A-site of ribosomes during protein biosynthesis. The polypeptide is Elongation factor 1-alpha (Methanosarcina mazei (strain ATCC BAA-159 / DSM 3647 / Goe1 / Go1 / JCM 11833 / OCM 88) (Methanosarcina frisia)).